Reading from the N-terminus, the 238-residue chain is Ion-translocating oxidoreductase complex subunit E (238 aa).

6 helical membrane-spanning segments follow: residues 24-44, 52-72, 84-104, 106-126, 141-161, and 195-215; these read ALWQYNVALVQMLALCPTLAV, LGMGLATTLVLVMTNALISSM, VMIGVIAGVVTLTDMAMNAWM, ELYKVLGLFIALIVTNCAVLG, ILDGAGMGAGFTAVLVVIGGI, and GILLAILPPGAFIVLGFLLAA.

Belongs to the NqrDE/RnfAE family. As to quaternary structure, the complex is composed of six subunits: RnfA, RnfB, RnfC, RnfD, RnfE and RnfG.

Its subcellular location is the cell inner membrane. Part of a membrane-bound complex that couples electron transfer with translocation of ions across the membrane. This Azotobacter vinelandii (strain DJ / ATCC BAA-1303) protein is Ion-translocating oxidoreductase complex subunit E.